Here is a 376-residue protein sequence, read N- to C-terminus: 3-dehydroquinate synthase (376 aa).

Residues 115-119, 139-140, Lys152, and Lys161 each bind NAD(+); these read GVIGD and TS. Residues Glu194, His256, and His275 each contribute to the Zn(2+) site.

It belongs to the sugar phosphate cyclases superfamily. Dehydroquinate synthase family. Co(2+) serves as cofactor. Requires Zn(2+) as cofactor. NAD(+) is required as a cofactor.

The protein localises to the cytoplasm. The catalysed reaction is 7-phospho-2-dehydro-3-deoxy-D-arabino-heptonate = 3-dehydroquinate + phosphate. It functions in the pathway metabolic intermediate biosynthesis; chorismate biosynthesis; chorismate from D-erythrose 4-phosphate and phosphoenolpyruvate: step 2/7. Its function is as follows. Catalyzes the conversion of 3-deoxy-D-arabino-heptulosonate 7-phosphate (DAHP) to dehydroquinate (DHQ). The protein is 3-dehydroquinate synthase of Rhizobium johnstonii (strain DSM 114642 / LMG 32736 / 3841) (Rhizobium leguminosarum bv. viciae).